The sequence spans 263 residues: Copper homeostasis protein cutC homolog (263 aa).

Belongs to the CutC family.

Involved in copper homeostasis. The chain is Copper homeostasis protein cutC homolog from Drosophila melanogaster (Fruit fly).